We begin with the raw amino-acid sequence, 336 residues long: Dihydrolipoyl dehydrogenase (336 aa).

FAD is bound by residues 34–42 (EKEVVGGIC), lysine 51, and glycine 115. A disulfide bridge links cysteine 42 with cysteine 47. Residues 180–184 (GGGVI), glutamate 203, valine 237, and 264–267 (SVGT) contribute to the NAD(+) site. FAD-binding residues include aspartate 304 and alanine 312.

Belongs to the class-I pyridine nucleotide-disulfide oxidoreductase family. In terms of assembly, homodimer. FAD serves as cofactor.

It is found in the cytoplasm. It carries out the reaction N(6)-[(R)-dihydrolipoyl]-L-lysyl-[protein] + NAD(+) = N(6)-[(R)-lipoyl]-L-lysyl-[protein] + NADH + H(+). Lipoamide dehydrogenase is a component of the alpha-ketoacid dehydrogenase complexes. The protein is Dihydrolipoyl dehydrogenase (pdhD) of Acholeplasma laidlawii.